The primary structure comprises 356 residues: Arginine kinase 1 (356 aa).

One can recognise a Phosphagen kinase N-terminal domain in the interval 6–91; the sequence is VLAKLEEGYA…FDPIIEDYHG (86 aa). 64-68 contacts substrate; that stretch reads GVGIY. One can recognise a Phosphagen kinase C-terminal domain in the interval 119 to 356; that stretch reads YVISTRVRCG…TELIKLEKSL (238 aa). ATP is bound by residues 122-126 and His-185; that span reads STRVR. Glu-225 is a binding site for substrate. Arg-229 is an ATP binding site. Cys-271 contributes to the substrate binding site. Residues 280–284 and 309–314 each bind ATP; these read RASVH and RGTRGE. Position 314 (Glu-314) interacts with substrate.

The protein belongs to the ATP:guanido phosphotransferase family.

The catalysed reaction is L-arginine + ATP = N(omega)-phospho-L-arginine + ADP + H(+). The polypeptide is Arginine kinase 1 (Drosophila melanogaster (Fruit fly)).